The primary structure comprises 244 residues: MSVKRLIITAVAAEADAVASGLDGAQPHPQGSANVRHTATADILVAGVGSAAAAAATAAALARRHYSLVICTGIAGGIGIAGIGDIVVADAVHPADLGAMSPDGFIPLEHLGIATTANAIDPPVVEELTGPLRYAGLAPVIGGILTVNTVTGTDAHADDLRRRYPGAVAEAMEGYGVAVAATRAGVRYGELRVVSNRVGRRDRRAWDIPGALRRLEHAFAALGAAWCNDGSGQAAAREIDGGCP.

The protein belongs to the PNP/UDP phosphorylase family. Futalosine hydrolase subfamily.

The enzyme catalyses futalosine + H2O = dehypoxanthine futalosine + hypoxanthine. The protein operates within quinol/quinone metabolism; menaquinone biosynthesis. Functionally, catalyzes the hydrolysis of futalosine (FL) to dehypoxanthine futalosine (DHFL) and hypoxanthine, a step in the biosynthesis of menaquinone (MK, vitamin K2). Cannot directly use aminodeoxyfutalosine (AFL) as a substrate. In Acidothermus cellulolyticus (strain ATCC 43068 / DSM 8971 / 11B), this protein is Futalosine hydrolase.